Consider the following 256-residue polypeptide: Flap endonuclease Xni (256 aa).

Aspartate 105 contributes to the Mg(2+) binding site. Residues 163–256 (RSQLIDYLAL…QFRIKKPDSE (94 aa)) enclose the 5'-3' exonuclease domain. 5 residues coordinate K(+): leucine 172, alanine 173, proline 181, valine 183, and isoleucine 186. Residues 185–190 (GIGPKS) are interaction with DNA.

It belongs to the Xni family. The cofactor is Mg(2+). Requires K(+) as cofactor.

Its function is as follows. Has flap endonuclease activity. During DNA replication, flap endonucleases cleave the 5'-overhanging flap structure that is generated by displacement synthesis when DNA polymerase encounters the 5'-end of a downstream Okazaki fragment. This Shewanella pealeana (strain ATCC 700345 / ANG-SQ1) protein is Flap endonuclease Xni.